Here is a 246-residue protein sequence, read N- to C-terminus: Protein crossbronx (246 aa).

A UBC core domain is found at 20-177 (QQEYKILAEY…VQESILESKA (158 aa)).

Belongs to the ubiquitin-conjugating enzyme family. FTS subfamily.

This chain is Protein crossbronx (cbx), found in Drosophila grimshawi (Hawaiian fruit fly).